Here is a 220-residue protein sequence, read N- to C-terminus: MKTKLMTLQDATGFFRDGMTIMVGGFMGIGTPSRLVEALLESGVRDLTLIANDTAFVDTGIGPLIVNGRVRKVIASHIGTNPETGRRMISGEMDVVLVPQGTLIEQIRCGGAGLGGFLTPTGVGTVVEEGKQTLTLDGKTWLLERPLRADLALIRAHRCDTLGNLTYQLSARNFNPLIALAADITLVEPDELVETGELQPDHIVTPGAVIDHIIVSQESK.

24–30 contributes to the CoA binding site; that stretch reads GGFMGIG.

The protein belongs to the 3-oxoacid CoA-transferase subunit A family. Heterotetramer composed of two alpha subunits (AtoD) and two beta subunits (AtoA).

Its subcellular location is the cytoplasm. The catalysed reaction is an acyl-CoA + acetate = a carboxylate + acetyl-CoA. The enzyme catalyses acetoacetate + acetyl-CoA = acetoacetyl-CoA + acetate. It carries out the reaction butanoate + acetyl-CoA = butanoyl-CoA + acetate. It catalyses the reaction acetoacetate + butanoyl-CoA = acetoacetyl-CoA + butanoate. It participates in lipid metabolism; short-chain fatty acid metabolism. With respect to regulation, inhibited by p-chloromercuribenzoate. Coenzyme A transferase which is involved in short-chain fatty acid degradation and catalyzes the activation of short-chain fatty acids to their respective CoA thiolesters. During acetoacetate degradation, catalyzes the transfer of CoA from acetyl-CoA to acetoacetate by a mechanism involving a covalent enzyme-CoA compound as a reaction intermediate. Utilizes a variety of short chain acyl-CoA and carboxylic acid substrates but exhibits maximal activity with normal and 3-keto substrates. The chain is Acetate CoA-transferase subunit alpha from Escherichia coli (strain K12).